A 1021-amino-acid chain; its full sequence is MPIFRFTALAMTLGLLSAPYNAMAATSNPAFDPKNLMQSEIYHFAQNNPLADFSSDKNSILTLSDKRSIMGNQSLLWKWKGGSSFTLHKKLIVPTDKEASKAWGRSSTPVFSFWLYNEKPIDGYLTIDFGEKLISTSEAQAGFKVKLDFTGWRAVGVSLNNDLENREMTLNATNTSSDGTQDSIGRSLGAKVDSIRFKAPSNVSQGEIYIDRIMFSVDDARYQWSDYQVKTRLSEPEIQFHNVKPQLPVTPENLAAIDLIRQRLINEFVGGEKETNLALEENISKLKSDFDALNIHTLANGGTQGRHLITDKQIIIYQPENLNSQDKQLFDNYVILGNYTTLMFNISRAYVLEKDPTQKAQLKQMYLLMTKHLLDQGFVKGSALVTTHHWGYSSRWWYISTLLMSDALKEANLQTQVYDSLLWYSREFKSSFDMKVSADSSDLDYFNTLSRQHLALLLLEPDDQKRINLVNTFSHYITGALTQVPPGGKDGLRPDGTAWRHEGNYPGYSFPAFKNASQLIYLLRDTPFSVGESGWNNLKKAMVSAWIYSNPEVGLPLAGRHPFNSPSLKSVAQGYYWLAMSAKSSPDKTLASIYLAISDKTQNESTAIFGETITPASLPQGFYAFNGGAFGIHRWQDKMVTLKAYNTNVWSSEIYNKDNRYGRYQSHGVAQIVSNGSQLSQGYQQEGWDWNRMQGATTIHLPLKDLDSPKPHTLMQRGERGFSGTSSLEGQYGMMAFDLIYPANLERFDPNFTAKKSVLAADNHLIFIGSNINSSDKNKNVETTLFQHAITPTLNTLWINGQKIENMPYQTTLQQGDWLIDSNGNGYLITQAEKVNVSRQHQVSAENKNRQPTEGNFSSAWIDHSTRPKDASYEYMVFLDATPEKMGEMAQKFRENNGLYQVLRKDKDVHIILDKLSNVTGYAFYQPASIEDKWIKKVNKPAIVMTHRQKDTLIVSAVTPDLNMTRQKAATPVTINVTINGKWQSADKNSEVKYQVSGDNTELTFTSYFGIPQEIKLSPLP.

An N-terminal signal peptide occupies residues 1-24 (MPIFRFTALAMTLGLLSAPYNAMA). Na(+)-binding residues include H43, M70, Q73, and D211. Residue H501 is the Proton acceptor of the active site. Residue Y508 is the Proton donor of the active site.

Belongs to the polysaccharide lyase 8 family. In terms of assembly, monomer.

It is found in the periplasm. The catalysed reaction is Endolytic cleavage of (1-&gt;4)-beta-galactosaminic bonds between N-acetylgalactosamine and either D-glucuronic acid or L-iduronic acid to produce a mixture of Delta(4)-unsaturated oligosaccharides of different sizes that are ultimately degraded to Delta(4)-unsaturated tetra- and disaccharides.. Is inhibited by Zn(2+), Ni(2+), Fe(2+) and Cu(2+). Its function is as follows. Endolytic, broad-specificity glycosaminoglycan lyase, which degrades the polysaccharides chondroitin, chondroitin-4-sulfate, chondroitin-6-sulfate, dermatan sulfate and to a lesser extent hyaluronan, by beta-elimination of 1,4-hexosaminidic bond to unsaturated tetrasaccharides and disaccharides. Is not active against keratan sulfate, heparan sulfate, and heparin. Is able to promote functional recovery in the injured central nervous system (CNS), via its role in the disruption of the normal organization of the extracellular matrix (ECM). The sequence is that of Chondroitin sulfate ABC endolyase from Proteus vulgaris.